Consider the following 353-residue polypeptide: Putative transcription factor MTF1 (353 aa).

Composition is skewed to polar residues over residues 11–26 and 36–58; these read VTRS…TSPA and EPSN…QQGN. Disordered regions lie at residues 11-96 and 129-174; these read VTRS…ALPC and FTTT…TTNP. Low complexity-rich tracts occupy residues 59 to 95 and 133 to 145; these read TEAS…PALP and NSSP…SPSS. The segment covering 148-164 has biased composition (basic residues); that stretch reads SHTRKNSKYTVRHHRTR. Positions 165 to 174 are enriched in polar residues; sequence QSSFNGTTNP.

It is found in the nucleus. Functionally, may be involved in transcriptional activation. The chain is Putative transcription factor MTF1 (MTF1) from Mucor circinelloides f. lusitanicus (Mucor racemosus var. lusitanicus).